Reading from the N-terminus, the 366-residue chain is Probable S-adenosyl-L-methionine-binding protein AF_0433 (366 aa).

In terms of domain architecture, TsaA-like spans 6 to 136 (LRQVGVIRSP…YSSTIDSVGN (131 aa)). S-adenosyl-L-methionine contacts are provided by residues 23–25 (PHQ), 61–62 (DR), Arg85, and 116–119 (LDGT).

Belongs to the tRNA methyltransferase O family.

The polypeptide is Probable S-adenosyl-L-methionine-binding protein AF_0433 (Archaeoglobus fulgidus (strain ATCC 49558 / DSM 4304 / JCM 9628 / NBRC 100126 / VC-16)).